The primary structure comprises 366 residues: Alanine racemase (366 aa).

Catalysis depends on Lys-40, which acts as the Proton acceptor; specific for D-alanine. Lys-40 is modified (N6-(pyridoxal phosphate)lysine). Residue Arg-136 coordinates substrate. Tyr-263 acts as the Proton acceptor; specific for L-alanine in catalysis. Met-310 contributes to the substrate binding site.

It belongs to the alanine racemase family. Requires pyridoxal 5'-phosphate as cofactor.

The enzyme catalyses L-alanine = D-alanine. Its pathway is amino-acid biosynthesis; D-alanine biosynthesis; D-alanine from L-alanine: step 1/1. In terms of biological role, catalyzes the interconversion of L-alanine and D-alanine. May also act on other amino acids. This is Alanine racemase (alr) from Streptococcus pyogenes serotype M28 (strain MGAS6180).